The sequence spans 496 residues: Cobyric acid synthase (496 aa).

The 195-residue stretch at 264–458 (HTRIAVVAYP…LHGLFEDAAV (195 aa)) folds into the GATase cobBQ-type domain. Cysteine 345 functions as the Nucleophile in the catalytic mechanism. Histidine 450 is a catalytic residue.

The protein belongs to the CobB/CobQ family. CobQ subfamily.

The protein operates within cofactor biosynthesis; adenosylcobalamin biosynthesis. In terms of biological role, catalyzes amidations at positions B, D, E, and G on adenosylcobyrinic A,C-diamide. NH(2) groups are provided by glutamine, and one molecule of ATP is hydrogenolyzed for each amidation. The sequence is that of Cobyric acid synthase from Acidovorax ebreus (strain TPSY) (Diaphorobacter sp. (strain TPSY)).